The primary structure comprises 989 residues: MLRFQRFASSYAQAQAVRKYPVGGIFHGYEVRRILPVPELRLTAVDLVHSQTGAEHLHIDRDDKNNVFSIAFKTNPPDSTGVPHILEHTTLCGSVKYPVRDPFFKMLNKSLANFMNAMTGPDYTFFPFSTTNPQDFANLRGVYLDSTLNPLLKQEDFDQEGWRLEHKNITDPESNIVFKGVVYNEMKGQISNANYYFWSKFQQSIYPSLNNSGGDPMKITDLRYGDLLDFHHKNYHPSNAKTFTYGNLPLVDTLKQLNEQFSGYGKRARKDKLLMPIDLKKDIDVKLLGQIDTMLPPEKQTKASMTWICGAPQDTYDTFLLKVLGNLLMDGHSSVMYQKLIESGIGLEFSVNSGVEPTTAVNLLTVGIQGVSDIEIFKDTVNNIFQNLLETEHPFDRKRIDAIIEQLELSKKDQKADFGLQLLYSILPGWTNKIDPFESLLFEDVLQRFRGDLETKGDTLFQDLIRKYIVHKPCFTFSIQGSEEFSKSLDDEEQTRLREKITALDEQDKKNIFKRGILLQEKQNEKEDLSCLPTLQIKDIPRAGDKYSIEQKNNTMSRITDTNGITYVRGKRLLNDIIPFELFPYLPLFAESLTNLGTTTESFSEIEDQIKLHTGGISTHVEVTSDPNTTEPRLIFGFDGWSLNSKTDHIFEFWSKILLETDFHKNSDKLKVLIRLLASSNTSSVADAGHAFARGYSAAHYRSSGAINETLNGIEQLQFINRLHSLLDNEETFQREVVDKLTELQKYIVDTNNMNFFITSDSDVQAKTVESQISKFMERLPHGSCLPNGPKTSDYPLIGSKCKHTLIKFPFQVHYTSQALLGVPYTHKDGSALQVMSNMLTFKHLHREVREKGGAYGGGASYSALAGIFSFYSYRDPQPLKSLETFKNSGRYILNDAKWGVTDLDEAKLTIFQQVDAPKSPKGEGVTYFMSGVTDDMKQARREQLLDVSLLDVHRVAEKYLLNKEGVSTVIGPGIEGKTVSPNWEVKEL.

The N-terminal 16 residues, 1–16 (MLRFQRFASSYAQAQA), are a transit peptide targeting the mitochondrion. His-84 is a binding site for Zn(2+). The active-site Proton acceptor is the Glu-87. His-88 provides a ligand contact to Zn(2+). Glu-160 is an active-site residue. Glu-185 serves as a coordination point for Zn(2+). Ser-920 carries the post-translational modification Phosphoserine. ATP is bound at residue 972 to 979 (GPGIEGKT).

It belongs to the peptidase M16 family. PreP subfamily. Monomer and homodimer; homodimerization is induced by binding of the substrate. It depends on Zn(2+) as a cofactor.

Its subcellular location is the mitochondrion intermembrane space. The protein localises to the mitochondrion matrix. Activated by nucleotides, including ATP, GTP, CTP, UTP, and ADP. Activated by copper, manganese, calcium and magnesium ions; copper and manganese restore activity following inactivation by EDTA (ethylenediaminetetraacetic acid). Inhibited by metal chelators including EDTA, EGTA (ethylene glycol bis(2-aminoethyl)tetraacetic acid), and 1,10-phenanthroline. Inhibited by copper, zinc, and iron ions. Also inhibited by dithiothreitol p-mercuribenzenesulfonic acid, N-ethylmaleimide, protoporphyrin, hemin, protamine and triarginine. In terms of biological role, degrades mitochondrial transit peptides after their cleavage in the intermembrane space or in the matrix, and presequence peptides; clearance of these peptides is required to keep the presequence processing machinery running. Preferentially cleaves the N-terminal side of paired basic amino acid residues. Also degrades other unstructured peptides. May function as an ATP-dependent peptidase as opposed to a metalloendopeptidase. The polypeptide is Presequence protease, mitochondrial (Saccharomyces cerevisiae (strain ATCC 204508 / S288c) (Baker's yeast)).